The following is a 191-amino-acid chain: Apoptosis regulator BHRF1 (191 aa).

Positions 1-18 (MAYSTREILLALCIRDSR) are interaction with host VRK2. A glycan (N-linked (GlcNAc...) asparagine; by host) is linked at Asn22. A BH1 motif is present at residues 89–109 (EIFHRGDPSLGRALAWMAWCM). The interaction with host VRK2 stretch occupies residues 89-142 (EIFHRGDPSLGRALAWMAWCMHACRTLCCNQSTPYYVVDLSVRGMLEASEGLDG). An N-linked (GlcNAc...) asparagine; by host glycan is attached at Asn118. The BH2 signature appears at 142–157 (GWIHQQGGWSTLIEDN). The helical transmembrane segment at 166 to 186 (WTLFLAGLTLSLLVICSYLFI) threads the bilayer.

Belongs to the Bcl-2 family. As to quaternary structure, interacts with isoform 1 of host VRK2; this interaction is involved in protecting cells from apoptosis. Interacts with host PRA1; this interaction seems to modulate BHRF1 anti-apoptotic activity. Interacts with host BCL2L11. Interacts with host BAD and BBC3. Interacts with BALF1; BALF1 acting as a negative regulator of the survival function of BHRF1. Interacts with host BECN1.

Its subcellular location is the host membrane. The protein localises to the host mitochondrion. Its function is as follows. Prevents premature death of the host cell during virus production, which would otherwise reduce the amount of progeny virus. Acts as a host B-cell leukemia/lymphoma 2 (Bcl-2) homolog, and interacts with pro-apoptotic proteins to prevent mitochondria permeabilization, release of cytochrome c and subsequent apoptosis of the host cell. In addition, plays a role in the inhibiton of host BECN1-mediated starvation-induced autophagy without affecting basal levels of autophagy. The polypeptide is Apoptosis regulator BHRF1 (Epstein-Barr virus (strain GD1) (HHV-4)).